A 146-amino-acid chain; its full sequence is Interleukin-13 (146 aa).

The signal sequence occupies residues 1-24; it reads MHPLLNPLLLALGLMALLLTTVIA. 4 N-linked (GlcNAc...) asparagine glycosylation sites follow: N52, N63, N71, and N86. Intrachain disulfides connect C62–C90 and C78–C104.

This sequence belongs to the IL-4/IL-13 family. As to quaternary structure, interacts with IL13RA2.

It localises to the secreted. Functionally, cytokine that plays important roles in allergic inflammation and immune response to parasite infection. Synergizes with IL2 in regulating interferon-gamma synthesis. Stimulates B-cell proliferation, and activation of eosinophils, basophils, and mast cells. Plays an important role in controlling IL33 activity by modulating the production of transmembrane and soluble forms of interleukin-1 receptor-like 1/IL1RL1. Displays the capacity to antagonize Th1-driven proinflammatory immune response and downregulates synthesis of many proinflammatory cytokines including IL1, IL6, IL10, IL12 and TNF-alpha through a mechanism that partially involves suppression of NF-kappa-B. Also functions on nonhematopoietic cells, including endothelial cells where it induces vascular cell adhesion protein 1/VCAM1, which is important in the recruitment of eosinophils. Exerts its biological effects through its receptors which comprises the IL4R chain and the IL13RA1 chain, to activate JAK1 and TYK2, leading to the activation of STAT6. Aside from IL13RA1, another receptor IL13RA2 acts as a high affinity decoy for IL13 and mediates internalization and depletion of extracellular IL13. The chain is Interleukin-13 (IL13) from Homo sapiens (Human).